Consider the following 556-residue polypeptide: Formate--tetrahydrofolate ligase (556 aa).

An ATP-binding site is contributed by 65–72 (TPAGEGKT).

This sequence belongs to the formate--tetrahydrofolate ligase family.

The catalysed reaction is (6S)-5,6,7,8-tetrahydrofolate + formate + ATP = (6R)-10-formyltetrahydrofolate + ADP + phosphate. The protein operates within one-carbon metabolism; tetrahydrofolate interconversion. The protein is Formate--tetrahydrofolate ligase of Alkaliphilus oremlandii (strain OhILAs) (Clostridium oremlandii (strain OhILAs)).